A 301-amino-acid chain; its full sequence is 33 kDa chaperonin (301 aa).

Intrachain disulfides connect Cys240–Cys242 and Cys273–Cys276.

Belongs to the HSP33 family. Post-translationally, under oxidizing conditions two disulfide bonds are formed involving the reactive cysteines. Under reducing conditions zinc is bound to the reactive cysteines and the protein is inactive.

It is found in the cytoplasm. In terms of biological role, redox regulated molecular chaperone. Protects both thermally unfolding and oxidatively damaged proteins from irreversible aggregation. Plays an important role in the bacterial defense system toward oxidative stress. This is 33 kDa chaperonin from Rippkaea orientalis (strain PCC 8801 / RF-1) (Cyanothece sp. (strain PCC 8801)).